The sequence spans 168 residues: MPKPSKGARLGGSAAHEKLLLANLAKSLFEHGRITTTEAKARKLRPYAERLVTKAKKGDLHNRRQVLQVITDKSIVHTLFTEIGPRYENRPGGYTRITKIGNRRGDNAPMAVIELVEALTVAQQATGEAEAATKRAAKDAEGSAEVSEAKVDTTKADDEAAAEESKDA.

A disordered region spans residues 124 to 168 (QATGEAEAATKRAAKDAEGSAEVSEAKVDTTKADDEAAAEESKDA). A compositionally biased stretch (basic and acidic residues) spans 131–168 (AATKRAAKDAEGSAEVSEAKVDTTKADDEAAAEESKDA).

It belongs to the bacterial ribosomal protein bL17 family. In terms of assembly, part of the 50S ribosomal subunit. Contacts protein L32.

The protein is Large ribosomal subunit protein bL17 of Streptomyces coelicolor (strain ATCC BAA-471 / A3(2) / M145).